Reading from the N-terminus, the 73-residue chain is Large ribosomal subunit protein bL28 (73 aa).

It belongs to the bacterial ribosomal protein bL28 family.

The polypeptide is Large ribosomal subunit protein bL28 (Anaeromyxobacter sp. (strain Fw109-5)).